A 62-amino-acid chain; its full sequence is uncharacterized protein (62 aa).

This is an uncharacterized protein from Homo sapiens (Human).